A 501-amino-acid chain; its full sequence is Na(+)/H(+) antiporter NhaB (501 aa).

A run of 11 helical transmembrane segments spans residues 24-44 (VILLFLVINPIVMYLLGPGVA), 46-66 (WLLIGEFIFTLAMALKCYPLL), 90-110 (VLTNFPVILLLMFMVAGIYFM), 145-165 (FLDALTVTAVIISVAVGFFSV), 206-226 (LLMHGAIGTALGGVATMVGEP), 239-259 (FAGFFLHMAPVSIPVLFAGLA), 302-319 (ALWIQAVAAVILVFGLAF), 351-371 (FQESLPFTSLLVVFFAVVAVI), 395-415 (MFFIANGLLSMISDNVFVATV), 450-470 (VATPNGQAAFLFLLTSAIAPL), and 478-498 (MVIMALPYTIVMGGVGLYMVT).

Belongs to the NhaB Na(+)/H(+) (TC 2.A.34) antiporter family.

The protein localises to the cell inner membrane. The enzyme catalyses 2 Na(+)(in) + 3 H(+)(out) = 2 Na(+)(out) + 3 H(+)(in). Its function is as follows. Na(+)/H(+) antiporter that extrudes sodium in exchange for external protons. The chain is Na(+)/H(+) antiporter NhaB from Marinobacter nauticus (strain ATCC 700491 / DSM 11845 / VT8) (Marinobacter aquaeolei).